We begin with the raw amino-acid sequence, 425 residues long: Serine--tRNA ligase (425 aa).

233-235 is a binding site for L-serine; the sequence is TAE. 264–266 serves as a coordination point for ATP; sequence RRE. An L-serine-binding site is contributed by Glu287. Residue 351-354 participates in ATP binding; sequence EISS. Position 385 (Ser385) interacts with L-serine.

The protein belongs to the class-II aminoacyl-tRNA synthetase family. Type-1 seryl-tRNA synthetase subfamily. In terms of assembly, homodimer. The tRNA molecule binds across the dimer.

Its subcellular location is the cytoplasm. It carries out the reaction tRNA(Ser) + L-serine + ATP = L-seryl-tRNA(Ser) + AMP + diphosphate + H(+). The enzyme catalyses tRNA(Sec) + L-serine + ATP = L-seryl-tRNA(Sec) + AMP + diphosphate + H(+). It functions in the pathway aminoacyl-tRNA biosynthesis; selenocysteinyl-tRNA(Sec) biosynthesis; L-seryl-tRNA(Sec) from L-serine and tRNA(Sec): step 1/1. Functionally, catalyzes the attachment of serine to tRNA(Ser). Is also able to aminoacylate tRNA(Sec) with serine, to form the misacylated tRNA L-seryl-tRNA(Sec), which will be further converted into selenocysteinyl-tRNA(Sec). This Prochlorococcus marinus (strain MIT 9215) protein is Serine--tRNA ligase.